The following is a 402-amino-acid chain: 1-deoxy-D-xylulose 5-phosphate reductoisomerase (402 aa).

The NADPH site is built by Thr21, Gly22, Ser23, Ile24, Gly47, Asn50, and Asn127. Residue Lys128 participates in 1-deoxy-D-xylulose 5-phosphate binding. Position 129 (Glu129) interacts with NADPH. Residue Asp151 participates in Mn(2+) binding. 4 residues coordinate 1-deoxy-D-xylulose 5-phosphate: Ser152, Glu153, Ser177, and His200. Residue Glu153 participates in Mn(2+) binding. An NADPH-binding site is contributed by Gly206. 1-deoxy-D-xylulose 5-phosphate is bound by residues Ser213, Asn218, Lys219, and Glu222. Glu222 provides a ligand contact to Mn(2+).

Belongs to the DXR family. Mg(2+) is required as a cofactor. It depends on Mn(2+) as a cofactor.

The catalysed reaction is 2-C-methyl-D-erythritol 4-phosphate + NADP(+) = 1-deoxy-D-xylulose 5-phosphate + NADPH + H(+). It functions in the pathway isoprenoid biosynthesis; isopentenyl diphosphate biosynthesis via DXP pathway; isopentenyl diphosphate from 1-deoxy-D-xylulose 5-phosphate: step 1/6. Catalyzes the NADPH-dependent rearrangement and reduction of 1-deoxy-D-xylulose-5-phosphate (DXP) to 2-C-methyl-D-erythritol 4-phosphate (MEP). This is 1-deoxy-D-xylulose 5-phosphate reductoisomerase from Mycobacterium marinum (strain ATCC BAA-535 / M).